Consider the following 273-residue polypeptide: MSTPRIAFIGAGNMAASLIGGLRAQGVPAAQIRASDPGAEQRAKIAGEFAIDVVESNAEAVADADVVVLSVKPQAMKAVCQALAPALKPEQLIVSIAAGIPCASLEAWLGQPRPVVRCMPNTPALLRQGASGLYANAQVSAAQCEQAGQLLSAVGIALWLDDEAQIDAVTAVSGSGPAYFFLLMQAMTDAGEKLGLSRETASRLTLQTALGAAQMALSSEVEPAELRRRVTSPNGTTEAAIKSFQANGFEALVEQALNAASQRSAELAEQLGQ.

It belongs to the pyrroline-5-carboxylate reductase family.

It localises to the cytoplasm. The catalysed reaction is L-proline + NADP(+) = (S)-1-pyrroline-5-carboxylate + NADPH + 2 H(+). It carries out the reaction L-proline + NAD(+) = (S)-1-pyrroline-5-carboxylate + NADH + 2 H(+). Its pathway is amino-acid biosynthesis; L-proline biosynthesis; L-proline from L-glutamate 5-semialdehyde: step 1/1. Its function is as follows. Catalyzes the reduction of 1-pyrroline-5-carboxylate (PCA) to L-proline. This is Pyrroline-5-carboxylate reductase from Pseudomonas aeruginosa (strain ATCC 15692 / DSM 22644 / CIP 104116 / JCM 14847 / LMG 12228 / 1C / PRS 101 / PAO1).